The sequence spans 83 residues: Mu-theraphotoxin-Hhn2j 4 (83 aa).

Positions 1–21 (MKASMFLALAGLVLLFVVGYA) are cleaved as a signal peptide. Positions 22–48 (SESEEKEFPIELLSKIFAVDVFKGEGR) are excised as a propeptide. 3 cysteine pairs are disulfide-bonded: C50–C65, C57–C70, and C64–C77. L81 is subject to Leucine amide.

This sequence belongs to the neurotoxin 10 (Hwtx-1) family. 15 (Hntx-3) subfamily. As to quaternary structure, monomer. Expressed by the venom gland.

The protein resides in the secreted. Its function is as follows. Lethal neurotoxin. Selectively blocks tetrodotoxin-sensitive voltage-gated sodium channels (Nav). Does not affect tetrodotoxin-resistant voltage-gated sodium channels or calcium channels. In Cyriopagopus hainanus (Chinese bird spider), this protein is Mu-theraphotoxin-Hhn2j 4.